A 786-amino-acid polypeptide reads, in one-letter code: Pentatricopeptide repeat-containing protein 10, chloroplastic (786 aa).

The tract at residues 1–71 (MEATGRGLFP…HQTPTPPHSF (71 aa)) is disordered. The transit peptide at 1 to 95 (MEATGRGLFP…HPLPTLAAFL (95 aa)) directs the protein to the chloroplast. Pro residues predominate over residues 27 to 36 (PAAPPPPSPS). Positions 37–50 (SLPLDSLLLHLTAP) are enriched in low complexity. PPR repeat units follow at residues 137–167 (DASALEMVVRALGREGQHDAVCALLDETPLP), 173–207 (DVRAYTTVLHALSRAGRYERALELFAELRRQGVAP), 208–243 (TLVTYNVVLDVYGRMGRSWPRIVALLDEMRAAGVEP), 244–278 (DGFTASTVIAACCRDGLVDEAVAFFEDLKARGHAP), 279–313 (CVVTYNALLQVFGKAGNYTEALRVLGEMEQNGCQP), 314–348 (DAVTYNELAGTYARAGFFEEAARCLDTMASKGLLP), 349–383 (NAFTYNTVMTAYGNVGKVDEALALFDQMKKTGFVP), 384–418 (NVNTYNLVLGMLGKKSRFTVMLEMLGEMSRSGCTP), 419–453 (NRVTWNTMLAVCGKRGMEDYVTRVLEGMRSCGVEL), 454–488 (SRDTYNTLIAAYGRCGSRTNAFKMYNEMTSAGFTP), 489–523 (CITTYNALLNVLSRQGDWSTAQSIVSKMRTKGFKP), 524–558 (NEQSYSLLLQCYAKGGNVAGIAAIENEVYGSGAVF), 560–594 (SWVILRTLVIANFKCRRLDGMETAFQEVKARGYNP), 595–629 (DLVIFNSMLSIYAKNGMYSKATEVFDSIKRSGLSP), 630–664 (DLITYNSLMDMYAKCSESWEAEKILNQLKCSQTMK), 666–700 (DVVSYNTVINGFCKQGLVKEAQRVLSEMVADGMAP), 701–735 (CAVTYHTLVGGYSSLEMFSEAREVIGYMVQHGLKP), and 736–770 (MELTYRRVVESYCRAKRFEEARGFLSEVSETDLDF).

This sequence belongs to the PPR family. P subfamily. In terms of assembly, forms homodimers.

Its subcellular location is the plastid. It is found in the chloroplast stroma. Involved in chloroplast mRNA stability. Binds specifically to two intergenic RNA regions of similar sequence located in the chloroplast atpH 5'-UTR and psaJ 3'-UTR, and serves as a barrier to RNA decay. Binding to a specific site in the intergenic region of the chloroplast atpH is sufficient to block 5'-3' and 3'-5' exonucleases. Acts as a protein barrier to block mRNA degradation by exonucleases, and defines processed mRNA termini in chloroplasts. Remodels the structure of the atpH ribosome-binding site in a manner that can account for its ability to enhance translation. Stabilizes a RNA 3'-end downstream from psaI. Binds atpH RNA as a monomer. The protein is Pentatricopeptide repeat-containing protein 10, chloroplastic of Zea mays (Maize).